Here is a 230-residue protein sequence, read N- to C-terminus: Tol-Pal system protein TolQ (230 aa).

The next 3 membrane-spanning stretches (helical) occupy residues 16–36 (LVKLIMLILIGFSIASWAIII), 139–159 (YIGLFGTVWGIMHAFIALGAV), and 171–191 (IAEALIATAIGLFAAIPAVMA).

Belongs to the ExbB/TolQ family. The Tol-Pal system is composed of five core proteins: the inner membrane proteins TolA, TolQ and TolR, the periplasmic protein TolB and the outer membrane protein Pal. They form a network linking the inner and outer membranes and the peptidoglycan layer.

It localises to the cell inner membrane. Functionally, part of the Tol-Pal system, which plays a role in outer membrane invagination during cell division and is important for maintaining outer membrane integrity. Required, with TolR, for the proton motive force-dependent activation of TolA and for TolA-Pal interaction. The polypeptide is Tol-Pal system protein TolQ (Escherichia coli O157:H7).